Here is a 468-residue protein sequence, read N- to C-terminus: ATP synthase subunit beta (468 aa).

Residue 155–162 (GGAGVGKT) coordinates ATP.

The protein belongs to the ATPase alpha/beta chains family. In terms of assembly, F-type ATPases have 2 components, CF(1) - the catalytic core - and CF(0) - the membrane proton channel. CF(1) has five subunits: alpha(3), beta(3), gamma(1), delta(1), epsilon(1). CF(0) has three main subunits: a(1), b(2) and c(9-12). The alpha and beta chains form an alternating ring which encloses part of the gamma chain. CF(1) is attached to CF(0) by a central stalk formed by the gamma and epsilon chains, while a peripheral stalk is formed by the delta and b chains.

It localises to the cell membrane. The enzyme catalyses ATP + H2O + 4 H(+)(in) = ADP + phosphate + 5 H(+)(out). Functionally, produces ATP from ADP in the presence of a proton gradient across the membrane. The catalytic sites are hosted primarily by the beta subunits. In Streptococcus suis (strain 98HAH33), this protein is ATP synthase subunit beta.